A 133-amino-acid polypeptide reads, in one-letter code: IgW chain C region, secreted form 2 (133 aa).

The Ig-like domain maps to 1–71; the sequence is VISGFYPDSV…TGSRFNDRIS (71 aa). N-linked (GlcNAc...) asparagine glycans are attached at residues asparagine 32 and asparagine 112. The secretory tail stretch occupies residues 76–133; sequence KGGTVNLPVPGGNTPCTCPPSSCSGCMPKLVYQTDLNVTLENGGQLQYNCHQQACKIK.

As to expression, expressed mainly in lymphoid tissues including spleen, epigonal organ and circulating lymphocytes.

The protein localises to the secreted. In Heterodontus francisci (Horn shark), this protein is IgW chain C region, secreted form 2.